Consider the following 25-residue polypeptide: Ocellatin-P1 (25 aa).

Leu-25 carries the leucine amide modification.

As to expression, expressed by the skin glands.

The protein localises to the secreted. Its function is as follows. Antibacterial peptide that inhibits reference strains of both Gram-negative bacteria (E.coli, E.cloacae, K.pneumoniae, P.aeruginosa) and Gram-positive bacteria (S.aureus, S.epidermidis, E.faecalis, Streptococcus group B) with relatively low potencies (MIC=25-200 uM). The peptide shows very low hemolytic activity against human erythrocytes. Wheel projection demonstrates the amphipathicity of the alpha-helices is low which may explain the low antibacterial potency. The sequence is that of Ocellatin-P1 from Leptodactylus pentadactylus (Smokey jungle frog).